The primary structure comprises 164 residues: MSVDPLSSKALKIKRELSENTPHLSDEALMGLSVRELNRHLRGLSAEEVTRLKQRRRTLKNRGYAASCRVKRVCQKEELQKQKSELEREVDKLARENAAMRLELDALRGKCEALQGFARSVAAARGPATLVAPASVITIVKSTPGSGSGPAHGPDPAHGPASCS.

The interval 51-76 is basic motif; the sequence is RLKQRRRTLKNRGYAASCRVKRVCQK. In terms of domain architecture, bZIP spans 51-114; that stretch reads RLKQRRRTLK…DALRGKCEAL (64 aa). Residues 79 to 93 form a leucine-zipper region; sequence LQKQKSELEREVDKL. The interval 141–164 is disordered; that stretch reads KSTPGSGSGPAHGPDPAHGPASCS. A compositionally biased stretch (low complexity) spans 149–164; that stretch reads GPAHGPDPAHGPASCS.

Belongs to the bZIP family. Maf subfamily. As to quaternary structure, monomer and homo- or heterodimer. Interacts with MIP. Forms high affinity heterodimers with members of the CNC-bZIP family such as NFE2L1/NRF1. Expressed in the term myometrium and kidney.

The protein resides in the nucleus. Functionally, since they lack a putative transactivation domain, the small Mafs behave as transcriptional repressors when they dimerize among themselves. However, they seem to serve as transcriptional activators by dimerizing with other (usually larger) basic-zipper proteins, such as NFE2L1/NRF1, and recruiting them to specific DNA-binding sites. Interacts with the upstream promoter region of the oxytocin receptor gene. May be a transcriptional enhancer in the up-regulation of the oxytocin receptor gene at parturition. This Homo sapiens (Human) protein is Transcription factor MafF (MAFF).